Consider the following 72-residue polypeptide: Translation initiation factor IF-1 (72 aa).

An S1-like domain is found at 1–72 (MAKEEVLEFP…TKGRITYRLK (72 aa)).

It belongs to the IF-1 family. As to quaternary structure, component of the 30S ribosomal translation pre-initiation complex which assembles on the 30S ribosome in the order IF-2 and IF-3, IF-1 and N-formylmethionyl-tRNA(fMet); mRNA recruitment can occur at any time during PIC assembly.

Its subcellular location is the cytoplasm. In terms of biological role, one of the essential components for the initiation of protein synthesis. Stabilizes the binding of IF-2 and IF-3 on the 30S subunit to which N-formylmethionyl-tRNA(fMet) subsequently binds. Helps modulate mRNA selection, yielding the 30S pre-initiation complex (PIC). Upon addition of the 50S ribosomal subunit IF-1, IF-2 and IF-3 are released leaving the mature 70S translation initiation complex. This chain is Translation initiation factor IF-1, found in Brucella suis biovar 1 (strain 1330).